The primary structure comprises 677 residues: Transcription factor IIIB 90 kDa subunit (677 aa).

Residues 2–33 (TGRVCRGCGGTDIELDAARGDAVCTACGSVLE) form a TFIIB-type zinc finger. C6, C9, C25, and C28 together coordinate Zn(2+). Repeat copies occupy residues 91–172 (RHIH…LLAR) and 185–269 (LYIP…EFED). 2 disordered regions span residues 340-368 (KGGL…TEDE) and 385-413 (LLGG…SLLD). A Phosphothreonine modification is found at T365. Position 450 is a phosphoserine (S450). Disordered stretches follow at residues 501 to 521 (YKEH…ASTA) and 544 to 653 (RGLS…EDGE). S553 carries the post-translational modification Phosphoserine. Acidic residues predominate over residues 640-653 (EEADEEEPDEEDGE).

Belongs to the TFIIB family. As to quaternary structure, TFIIIB comprises at least the TATA-binding protein (TBP) and the B-related factor 1 (BRF1/TFIIIB90). Interacts with BDP1. Interacts with MAF1.

The protein resides in the nucleus. Its function is as follows. General activator of RNA polymerase which utilizes different TFIIIB complexes at structurally distinct promoters. The isoform 1 is involved in the transcription of tRNA, adenovirus VA1, 7SL and 5S RNA. Isoform 2 is required for transcription of the U6 promoter. The protein is Transcription factor IIIB 90 kDa subunit (BRF1) of Homo sapiens (Human).